Consider the following 184-residue polypeptide: ATP synthase subunit b, chloroplastic (184 aa).

Residues 27-49 traverse the membrane as a helical segment; the sequence is LATNLINLSVVLGVLIFFGKGVL.

It belongs to the ATPase B chain family. In terms of assembly, F-type ATPases have 2 components, F(1) - the catalytic core - and F(0) - the membrane proton channel. F(1) has five subunits: alpha(3), beta(3), gamma(1), delta(1), epsilon(1). F(0) has four main subunits: a(1), b(1), b'(1) and c(10-14). The alpha and beta chains form an alternating ring which encloses part of the gamma chain. F(1) is attached to F(0) by a central stalk formed by the gamma and epsilon chains, while a peripheral stalk is formed by the delta, b and b' chains.

Its subcellular location is the plastid. The protein localises to the chloroplast thylakoid membrane. Its function is as follows. F(1)F(0) ATP synthase produces ATP from ADP in the presence of a proton or sodium gradient. F-type ATPases consist of two structural domains, F(1) containing the extramembraneous catalytic core and F(0) containing the membrane proton channel, linked together by a central stalk and a peripheral stalk. During catalysis, ATP synthesis in the catalytic domain of F(1) is coupled via a rotary mechanism of the central stalk subunits to proton translocation. Functionally, component of the F(0) channel, it forms part of the peripheral stalk, linking F(1) to F(0). This Guizotia abyssinica (Niger) protein is ATP synthase subunit b, chloroplastic.